The primary structure comprises 79 residues: Small serum protein 3 (79 aa).

The first 19 residues, 1 to 19, serve as a signal peptide directing secretion; sequence MKVFFILIIFSFTLATCQG. 3 disulfide bridges follow: Cys21-Cys72, Cys39-Cys64, and Cys62-Cys71.

It localises to the secreted. Functionally, shows an slight inhibitory effect toward the metalloproteinase brevilysin H6, but does not inhibit the metalloproteinases thermolysin, HR1A and HR1B. This is Small serum protein 3 from Protobothrops flavoviridis (Habu).